A 311-amino-acid chain; its full sequence is Serine/threonine-protein phosphatase PP1-1 (311 aa).

Positions 53, 55, 82, and 114 each coordinate Mn(2+). Histidine 115 serves as the catalytic Proton donor. Histidine 164 and histidine 238 together coordinate Mn(2+).

The protein belongs to the PPP phosphatase family. PP-6 (PP-V) subfamily. As to quaternary structure, inactivated in a complex with phosphatase methylesterase PPE1 (PP2Ai). Interacts with phosphatase 2A activator RRD1, which can reactivate PP2Ai by dissociating the catalytic subunit from the complex. Forms a ternary complex with RRD1-TAP42. It depends on Mn(2+) as a cofactor.

The protein resides in the cytoplasm. It catalyses the reaction O-phospho-L-seryl-[protein] + H2O = L-seryl-[protein] + phosphate. The catalysed reaction is O-phospho-L-threonyl-[protein] + H2O = L-threonyl-[protein] + phosphate. Its function is as follows. Involved in the dephosphorylation of the large subunit of RNA polymerase II. Is required in late G1 for normal G1 cyclin expression, bud initiation and expression of certain genes that are periodically expressed during late G1. Associates with the SAP proteins in a cell cycle-dependent manner. The chain is Serine/threonine-protein phosphatase PP1-1 (SIT4) from Saccharomyces cerevisiae (strain ATCC 204508 / S288c) (Baker's yeast).